Here is a 360-residue protein sequence, read N- to C-terminus: Phospho-N-acetylmuramoyl-pentapeptide-transferase (360 aa).

The Periplasmic segment spans residues 1-25 (MLVWLAEHLVKYYSGFNVFSYLTFR). Residues 26 to 46 (AIVSLLTALFISLWMGPRMIA) traverse the membrane as a helical segment. Residues 47 to 71 (HLQKLSFGQVVRNDGPESHFSKRGT) are Cytoplasmic-facing. Residues 72-92 (PTMGGIMILTAIVISVLLWAY) form a helical membrane-spanning segment. Position 93 (P93) is a topological domain, periplasmic. Residues 94-114 (SNPYVWCVLVVLVGYGVIGFV) traverse the membrane as a helical segment. The Cytoplasmic portion of the chain corresponds to 115 to 131 (DDYRKVVRKDTKGLIAR). Residues 132–152 (WKYFWMSVIALGVAFALYLAG) traverse the membrane as a helical segment. Topologically, residues 153–167 (KDTPATQLVVPFFKD) are periplasmic. A helical transmembrane segment spans residues 168-188 (VMPQLGLFYILLAYFVIVGTG). Topologically, residues 189-198 (NAVNLTDGLD) are cytoplasmic. The helical transmembrane segment at 199–219 (GLAIMPTVFVAGGFALVAWAT) threads the bilayer. At 220–235 (GNMNFASYLHIPYLRH) the chain is on the periplasmic side. The chain crosses the membrane as a helical span at residues 236–256 (AGELVIVCTAIVGAGLGFLWF). Residues 257–262 (NTYPAQ) are Cytoplasmic-facing. A helical transmembrane segment spans residues 263–283 (VFMGDVGSLALGGALGIIAVL). The Periplasmic segment spans residues 284 to 287 (LRQE). The chain crosses the membrane as a helical span at residues 288–308 (FLLVIMGGVFVVETLSVILQV). Residues 309-337 (GSFKLRGQRIFRMAPIHHHYELKGWPEPR) lie on the Cytoplasmic side of the membrane. The chain crosses the membrane as a helical span at residues 338 to 358 (VIVRFWIISLMLVLIGLATLK). Over 359–360 (VR) the chain is Periplasmic.

It belongs to the glycosyltransferase 4 family. MraY subfamily. Requires Mg(2+) as cofactor.

It is found in the cell inner membrane. It carries out the reaction UDP-N-acetyl-alpha-D-muramoyl-L-alanyl-gamma-D-glutamyl-meso-2,6-diaminopimeloyl-D-alanyl-D-alanine + di-trans,octa-cis-undecaprenyl phosphate = di-trans,octa-cis-undecaprenyl diphospho-N-acetyl-alpha-D-muramoyl-L-alanyl-D-glutamyl-meso-2,6-diaminopimeloyl-D-alanyl-D-alanine + UMP. It functions in the pathway cell wall biogenesis; peptidoglycan biosynthesis. Catalyzes the initial step of the lipid cycle reactions in the biosynthesis of the cell wall peptidoglycan: transfers peptidoglycan precursor phospho-MurNAc-pentapeptide from UDP-MurNAc-pentapeptide onto the lipid carrier undecaprenyl phosphate, yielding undecaprenyl-pyrophosphoryl-MurNAc-pentapeptide, known as lipid I. This is Phospho-N-acetylmuramoyl-pentapeptide-transferase from Shigella boydii serotype 18 (strain CDC 3083-94 / BS512).